Here is a 178-residue protein sequence, read N- to C-terminus: UPF0232 protein cgR_0005 (178 aa).

Positions 16–55 (AMRRNGSVPDLNKNDAFRRPPAPKGGVEKRKKGRASGLDG) are disordered.

This sequence belongs to the UPF0232 family.

The sequence is that of UPF0232 protein cgR_0005 from Corynebacterium glutamicum (strain R).